A 127-amino-acid polypeptide reads, in one-letter code: Small ribosomal subunit protein uS13 (127 aa).

Positions 93-127 (RRSLPVRGQRTHTNARTRKGPRKGTVANKKKATAK) are disordered.

The protein belongs to the universal ribosomal protein uS13 family. As to quaternary structure, part of the 30S ribosomal subunit. Forms a loose heterodimer with protein S19. Forms two bridges to the 50S subunit in the 70S ribosome.

Located at the top of the head of the 30S subunit, it contacts several helices of the 16S rRNA. In the 70S ribosome it contacts the 23S rRNA (bridge B1a) and protein L5 of the 50S subunit (bridge B1b), connecting the 2 subunits; these bridges are implicated in subunit movement. Contacts the tRNAs in the A and P-sites. This is Small ribosomal subunit protein uS13 from Koribacter versatilis (strain Ellin345).